Here is a 307-residue protein sequence, read N- to C-terminus: Pseudouridine-5'-phosphate glycosidase (307 aa).

The active-site Proton donor is the Glu-28. Residues Lys-89 and Val-109 each contribute to the substrate site. Mn(2+) is bound at residue Asp-141. 143-145 (SAD) lines the substrate pocket. The Nucleophile role is filled by Lys-162.

Belongs to the pseudouridine-5'-phosphate glycosidase family. Homotrimer. Mn(2+) is required as a cofactor.

The catalysed reaction is D-ribose 5-phosphate + uracil = psi-UMP + H2O. In terms of biological role, catalyzes the reversible cleavage of pseudouridine 5'-phosphate (PsiMP) to ribose 5-phosphate and uracil. Functions biologically in the cleavage direction, as part of a pseudouridine degradation pathway. This Nocardioides sp. (strain ATCC BAA-499 / JS614) protein is Pseudouridine-5'-phosphate glycosidase.